Here is a 297-residue protein sequence, read N- to C-terminus: MGLPVHNQPHKAHSGSPASTFSAALVSSAISNVIGYPLDSIKVRQQTYNFPTIRSCFQNAVKNEGLKGLYRGLTLPLISATLSRSVSFTVYDSLKLTFAHVDPTLRYFISGLGTGTFISLFACPFEYSKLYSQIDMLLRKTNMGRRQETNSKLSVRPPLSSFQSASDIVRRYGFTALWNGYRYHLTRDALGSACYFTIYETFKKNLIANDVKPHFAYAFSGAFCGALSWILVFPVDTAKSIVQRNTLLSIKTPLSSIPWLSFTIYRGIGISLMRSALINSCNFTLFELFRETKVLSK.

Solcar repeat units follow at residues 15–97 (GSPA…LKLT), 102–205 (DPTL…FKKN), and 212–292 (KPHF…FRET). Transmembrane regions (helical) follow at residues 18-38 (ASTF…GYPL), 72-91 (GLTL…FTVY), 107-127 (YFIS…PFEY), 184-204 (HLTR…TFKK), 215-235 (FAYA…VFPV), and 264-285 (IYRG…NFTL).

It belongs to the mitochondrial carrier (TC 2.A.29) family.

It localises to the mitochondrion inner membrane. Functionally, required for arginine biosynthesis. Transports ornithine synthesized from glutamate in the mitochondrial matrix to the cytosol, where it is converted to arginine. The sequence is that of Mitochondrial ornithine transporter 1 from Schizosaccharomyces pombe (strain 972 / ATCC 24843) (Fission yeast).